The primary structure comprises 371 residues: Galanin receptor type 2 (371 aa).

Topologically, residues 1 to 27 are extracellular; sequence MNGSDSQGAEDSSQEGGGGWQPEAVLV. Asn2 carries an N-linked (GlcNAc...) asparagine glycan. The helical transmembrane segment at 28 to 48 threads the bilayer; that stretch reads PLFFALIFLVGAVGNALVLAV. The Cytoplasmic segment spans residues 49-59; the sequence is LLRGGQAVSTT. A helical transmembrane segment spans residues 60–80; the sequence is NLFILNLGVADLCFILCCVPF. Residues 81–98 are Extracellular-facing; it reads QATIYTLDDWVFGSLLCK. Cysteines 97 and 174 form a disulfide. The helical transmembrane segment at 99–120 threads the bilayer; sequence AVHFLIFLTMHASSFTLAAVSL. At 121–140 the chain is on the cytoplasmic side; the sequence is DRYLAIRYPLHSRELRTPRN. Residues 141–161 form a helical membrane-spanning segment; it reads ALAAIGLIWGLALLFSGPYLS. Residues 162–186 are Extracellular-facing; sequence YYSQSQLANLTVCHPAWSAPRRRAM. A helical transmembrane segment spans residues 187–207; that stretch reads DLCTFVFSYLLPVLVLSLTYA. At 208-236 the chain is on the cytoplasmic side; that stretch reads RTLHYLWRTVDPVAAGSGSQRAKRKVTRM. A helical membrane pass occupies residues 237-257; sequence IVIVAVLFCLCWMPHHALILC. Residues 258-259 are Extracellular-facing; it reads VW. Residues 260 to 280 form a helical membrane-spanning segment; it reads FGRFPLTRATYALRILSHLVS. Over 281–371 the chain is Cytoplasmic; the sequence is YANSCVNPIV…TLSRTLDPAC (91 aa).

The protein belongs to the G-protein coupled receptor 1 family.

Its subcellular location is the cell membrane. Receptor for the hormone galanin, GALP and spexin-1. The activity of this receptor is mediated by G proteins that activate the phospholipase C/protein kinase C pathway (via G(q)) and that inhibit adenylyl cyclase (via G(i)). The sequence is that of Galanin receptor type 2 (Galr2) from Mus musculus (Mouse).